A 217-amino-acid chain; its full sequence is Methylthioribulose-1-phosphate dehydratase (217 aa).

Positions 106 and 108 each coordinate Zn(2+).

It belongs to the aldolase class II family. MtnB subfamily. Zn(2+) is required as a cofactor.

It carries out the reaction 5-(methylsulfanyl)-D-ribulose 1-phosphate = 5-methylsulfanyl-2,3-dioxopentyl phosphate + H2O. Its pathway is amino-acid biosynthesis; L-methionine biosynthesis via salvage pathway; L-methionine from S-methyl-5-thio-alpha-D-ribose 1-phosphate: step 2/6. Catalyzes the dehydration of methylthioribulose-1-phosphate (MTRu-1-P) into 2,3-diketo-5-methylthiopentyl-1-phosphate (DK-MTP-1-P). This chain is Methylthioribulose-1-phosphate dehydratase, found in Xanthomonas campestris pv. campestris (strain 8004).